The primary structure comprises 77 residues: MADFEKIKSIIVEQLGVDESEVTPEAHFINDLGADSLDTVELVMALEEEFGVEISDEDAEKIQTVGDVIKFIDKLKG.

The region spanning 1–76 (MADFEKIKSI…DVIKFIDKLK (76 aa)) is the Carrier domain. Ser-36 is subject to O-(pantetheine 4'-phosphoryl)serine.

It belongs to the acyl carrier protein (ACP) family. Post-translationally, 4'-phosphopantetheine is transferred from CoA to a specific serine of apo-ACP by AcpS. This modification is essential for activity because fatty acids are bound in thioester linkage to the sulfhydryl of the prosthetic group.

Its subcellular location is the cytoplasm. It functions in the pathway lipid metabolism; fatty acid biosynthesis. In terms of biological role, carrier of the growing fatty acid chain in fatty acid biosynthesis. This Leptospira biflexa serovar Patoc (strain Patoc 1 / Ames) protein is Acyl carrier protein.